Reading from the N-terminus, the 241-residue chain is MIQPRKELDGVLLVDKPTAHTSHDVVARLRRKLNMKRIGHAGTLDPMATGLMILLIGKATTISQYLTSLDKEYEGTIELGKVTDSQDADGEVLSTLPVPPFTEAEIRAAMAGFMGDQYQTPPMYSAIKVDGVPLYKTARKGGEVEREPRFIRVSSFELTRFALPQFDFRLRCTKGTYVRTIAHDLGQRLGCGAHLAALRRTATDKFKLADALTLDAIEALPLPEIEKRLIPVYQAAPSIVG.

Catalysis depends on D45, which acts as the Nucleophile.

This sequence belongs to the pseudouridine synthase TruB family. Type 1 subfamily.

The enzyme catalyses uridine(55) in tRNA = pseudouridine(55) in tRNA. Its function is as follows. Responsible for synthesis of pseudouridine from uracil-55 in the psi GC loop of transfer RNAs. The polypeptide is tRNA pseudouridine synthase B (Opitutus terrae (strain DSM 11246 / JCM 15787 / PB90-1)).